The primary structure comprises 161 residues: Protein-export protein SecB (161 aa).

This sequence belongs to the SecB family. In terms of assembly, homotetramer, a dimer of dimers. One homotetramer interacts with 1 SecA dimer.

The protein localises to the cytoplasm. One of the proteins required for the normal export of preproteins out of the cell cytoplasm. It is a molecular chaperone that binds to a subset of precursor proteins, maintaining them in a translocation-competent state. It also specifically binds to its receptor SecA. In Rhodopseudomonas palustris (strain BisA53), this protein is Protein-export protein SecB.